The primary structure comprises 638 residues: E3 ubiquitin-protein ligase TRIM47 (638 aa).

Position 1 is an N-acetylmethionine (Met-1). The RING-type zinc-finger motif lies at 9–58; it reads CPICLEPLREPVTLPCGHNFCLACLGALWPHRGASGAGGPGGAARCPLCQ. Thr-72 is subject to Phosphothreonine. The tract at residues 79–119 is disordered; that stretch reads LRQGSGPGSGPGPAPALAPEPSAPSALPSVPEPSAPCAPEP. 2 stretches are compositionally biased toward pro residues: residues 88–100 and 108–119; these read GPGP…PEPS and VPEPSAPCAPEP. Residues 177–217 form a B box-type zinc finger; that stretch reads LEESLCPRHLRPLERYCRAERVCLCEACAAQEHRGHELVPL. The Zn(2+) site is built by Cys-182, His-185, Cys-204, and His-209. Positions 296–324 form a coiled coil; that stretch reads MLGRSQGDLRRQEEQRSRLSRARQNLSQV. Disordered regions lie at residues 300–322 and 384–411; these read SQGD…QNLS and LRGP…LEST. The segment covering 302 to 312 has biased composition (basic and acidic residues); sequence GDLRRQEEQRS. A B30.2/SPRY domain is found at 410–631; sequence STNLLESEAP…LQIGPLKKSC (222 aa). The residue at position 461 (Ser-461) is a Phosphoserine. Arg-582 is subject to Omega-N-methylarginine. Ser-588 is subject to Phosphoserine.

It belongs to the TRIM/RBCC family. As to expression, low expression in most tissues. Higher expression in kidney tubular cells. Overexpressed in astrocytoma tumor cells.

It localises to the cytoplasm. The protein localises to the nucleus. It catalyses the reaction S-ubiquitinyl-[E2 ubiquitin-conjugating enzyme]-L-cysteine + [acceptor protein]-L-lysine = [E2 ubiquitin-conjugating enzyme]-L-cysteine + N(6)-ubiquitinyl-[acceptor protein]-L-lysine.. It participates in protein modification; protein ubiquitination. Its function is as follows. E3 ubiquitin-protein ligase that mediates the ubiquitination and proteasomal degradation of CYLD. This chain is E3 ubiquitin-protein ligase TRIM47, found in Homo sapiens (Human).